The sequence spans 341 residues: MTEQQPVAVLGGGSFGTAVANLLAENGVPVRQWMRDPAQAEAMRVNRENPRYLKGIRLHDGVEPVNDLLATLQASELIFVALPSSALRSVLAPHAELLRGKGLVSLTKGIEAQSFKLMSQILEEIAPEARIGVLSGPNLAREIAEHALTATVVASEHEDLCQQVQAVLHGRTFRVYASADRFGVELGGALKNVYAIIAGMAVALGMGENTKSMLITRALAEMTRFAVSQGANPMTFLGLAGVGDLIVTCSSPKSRNYQVGYALGQGQSLEEAVNRLGEVAEGVNTLKVLKTKAQQVQVYMPLVAGLHAILFEGRTLNQVIEHLMRAEPKTDVDFISISGFN.

NADPH contacts are provided by Ser-14, Phe-15, Arg-35, and Lys-108. Residues Lys-108 and Gly-136 each coordinate sn-glycerol 3-phosphate. Ala-140 provides a ligand contact to NADPH. Residues Lys-191, Asp-244, Ser-254, Arg-255, and Asn-256 each coordinate sn-glycerol 3-phosphate. Lys-191 serves as the catalytic Proton acceptor. Position 255 (Arg-255) interacts with NADPH. The NADPH site is built by Val-279 and Glu-281.

It belongs to the NAD-dependent glycerol-3-phosphate dehydrogenase family.

Its subcellular location is the cytoplasm. The catalysed reaction is sn-glycerol 3-phosphate + NAD(+) = dihydroxyacetone phosphate + NADH + H(+). It catalyses the reaction sn-glycerol 3-phosphate + NADP(+) = dihydroxyacetone phosphate + NADPH + H(+). The protein operates within membrane lipid metabolism; glycerophospholipid metabolism. In terms of biological role, catalyzes the reduction of the glycolytic intermediate dihydroxyacetone phosphate (DHAP) to sn-glycerol 3-phosphate (G3P), the key precursor for phospholipid synthesis. The sequence is that of Glycerol-3-phosphate dehydrogenase [NAD(P)+] from Pseudomonas putida (strain ATCC 47054 / DSM 6125 / CFBP 8728 / NCIMB 11950 / KT2440).